Reading from the N-terminus, the 454-residue chain is Noelin-2 (454 aa).

The N-terminal stretch at methionine 1 to glycine 20 is a signal peptide. 2 coiled-coil regions span residues arginine 58–arginine 85 and leucine 136–leucine 193. Residues asparagine 74, asparagine 155, asparagine 275, asparagine 310, asparagine 399, and asparagine 441 are each glycosylated (N-linked (GlcNAc...) asparagine). Positions glycine 194 to histidine 446 constitute an Olfactomedin-like domain. Cysteine 195 and cysteine 377 form a disulfide bridge.

As to quaternary structure, peripherally associated with AMPAR complex. AMPAR complex consists of an inner core made of 4 pore-forming GluA/GRIA proteins (GRIA1, GRIA2, GRIA3 and GRIA4) and 4 major auxiliary subunits arranged in a twofold symmetry. One of the two pairs of distinct binding sites is occupied either by CNIH2, CNIH3 or CACNG2, CACNG3. The other harbors CACNG2, CACNG3, CACNG4, CACNG8 or GSG1L. This inner core of AMPAR complex is complemented by outer core constituents binding directly to the GluA/GRIA proteins at sites distinct from the interaction sites of the inner core constituents. Outer core constituents include at least PRRT1, PRRT2, CKAMP44/SHISA9, FRRS1L and NRN1. The proteins of the inner and outer core serve as a platform for other, more peripherally associated AMPAR constituents, including OLFM2. Alone or in combination, these auxiliary subunits control the gating and pharmacology of the AMPAR complex and profoundly impact their biogenesis and protein processing. Interacts with GRIA2. Interacts with OLFM1 and OLFM3. Interacts with SRF; the interaction promotes dissociation of SRF from the transcriptional repressor HEY2. Interacts with RUNX2. Post-translationally, N-glycosylated. As to expression, expressed in aortic smooth muscle (at protein level). In the fetus, expressed in the brain and ocular tissues including lens vesicle and optic cup.

The protein localises to the secreted. The protein resides in the synapse. Its subcellular location is the membrane. It localises to the nucleus. It is found in the cytoplasm. Its function is as follows. Involved in transforming growth factor beta (TGF-beta)-induced smooth muscle differentiation. TGF-beta induces expression and translocation of OLFM2 to the nucleus where it binds to SRF, causing its dissociation from the transcriptional repressor HEY2/HERP1 and facilitating binding of SRF to target genes. Plays a role in AMPAR complex organization. Is a regulator of vascular smooth-muscle cell (SMC) phenotypic switching, that acts by promoting RUNX2 and inhibiting MYOCD binding to SRF. SMC phenotypic switching is the process through which vascular SMCs undergo transition between a quiescent contractile phenotype and a proliferative synthetic phenotype in response to pathological stimuli. SMC phenotypic plasticity is essential for vascular development and remodeling. In Homo sapiens (Human), this protein is Noelin-2 (OLFM2).